A 279-amino-acid polypeptide reads, in one-letter code: Proteasome subunit beta (279 aa).

Positions 1 to 51 are cleaved as a propeptide — removed in mature form; by autocatalysis; the sequence is MTFDASGRLPEAFLTPGGSSFMDFLAGHAPDLLPGRRSLGTGDLSKDVPHG. The Nucleophile role is filled by Thr-52.

The protein belongs to the peptidase T1B family. The 20S proteasome core is composed of 14 alpha and 14 beta subunits that assemble into four stacked heptameric rings, resulting in a barrel-shaped structure. The two inner rings, each composed of seven catalytic beta subunits, are sandwiched by two outer rings, each composed of seven alpha subunits. The catalytic chamber with the active sites is on the inside of the barrel. Has a gated structure, the ends of the cylinder being occluded by the N-termini of the alpha-subunits. Is capped by the proteasome-associated ATPase, ARC.

The protein localises to the cytoplasm. The enzyme catalyses Cleavage of peptide bonds with very broad specificity.. It participates in protein degradation; proteasomal Pup-dependent pathway. The formation of the proteasomal ATPase ARC-20S proteasome complex, likely via the docking of the C-termini of ARC into the intersubunit pockets in the alpha-rings, may trigger opening of the gate for substrate entry. Interconversion between the open-gate and close-gate conformations leads to a dynamic regulation of the 20S proteasome proteolysis activity. In terms of biological role, component of the proteasome core, a large protease complex with broad specificity involved in protein degradation. This is Proteasome subunit beta from Kribbella flavida (strain DSM 17836 / JCM 10339 / NBRC 14399).